A 526-amino-acid chain; its full sequence is Putative D-lactate dehydrogenase C713.03, mitochondrial (526 aa).

The 180-residue stretch at 93–272 (YRGKTQLALK…TKLSVICPKR (180 aa)) folds into the FAD-binding PCMH-type domain.

Belongs to the FAD-binding oxidoreductase/transferase type 4 family. Requires FAD as cofactor.

The protein resides in the mitochondrion matrix. It catalyses the reaction (R)-lactate + 2 Fe(III)-[cytochrome c] = 2 Fe(II)-[cytochrome c] + pyruvate + 2 H(+). The sequence is that of Putative D-lactate dehydrogenase C713.03, mitochondrial from Schizosaccharomyces pombe (strain 972 / ATCC 24843) (Fission yeast).